A 311-amino-acid polypeptide reads, in one-letter code: Dermonecrotic toxin LlSicTox-alphaIII1i (311 aa).

The N-terminal stretch at 1 to 21 is a signal peptide; the sequence is MYAHLALILGCWTVVLQGAET. Residues 22-26 constitute a propeptide that is removed on maturation; that stretch reads DVGER. His38 is an active-site residue. Residues Glu58 and Asp60 each contribute to the Mg(2+) site. Residue His73 is the Nucleophile of the active site. Cys77 and Cys83 are disulfide-bonded. Asp117 lines the Mg(2+) pocket.

The protein belongs to the arthropod phospholipase D family. Class I subfamily. Requires Mg(2+) as cofactor. In terms of tissue distribution, expressed by the venom gland.

The protein resides in the secreted. The enzyme catalyses an N-(acyl)-sphingosylphosphocholine = an N-(acyl)-sphingosyl-1,3-cyclic phosphate + choline. The catalysed reaction is an N-(acyl)-sphingosylphosphoethanolamine = an N-(acyl)-sphingosyl-1,3-cyclic phosphate + ethanolamine. It catalyses the reaction a 1-acyl-sn-glycero-3-phosphocholine = a 1-acyl-sn-glycero-2,3-cyclic phosphate + choline. It carries out the reaction a 1-acyl-sn-glycero-3-phosphoethanolamine = a 1-acyl-sn-glycero-2,3-cyclic phosphate + ethanolamine. Its function is as follows. Dermonecrotic toxins cleave the phosphodiester linkage between the phosphate and headgroup of certain phospholipids (sphingolipid and lysolipid substrates), forming an alcohol (often choline) and a cyclic phosphate. This toxin acts on sphingomyelin (SM) with high activity. It also act on acyl- and alkyl-lysophosphatidylcholine (LPC), but not on sphingosylphosphorylcholine (SPC) and phosphatidylcholine (PC). It may also act on ceramide phosphoethanolamine (CPE), and lysophosphatidylethanolamine (LPE), but not on lysophosphatidylserine (LPS), and lysophosphatidylglycerol (LPG). It acts by transphosphatidylation, releasing exclusively cyclic phosphate products as second products. Induces complement-dependent hemolysis and dermonecrosis. Also induces increased vascular permeability, edema, inflammatory response, and platelet aggregation. This is Dermonecrotic toxin LlSicTox-alphaIII1i from Loxosceles laeta (South American recluse spider).